The sequence spans 185 residues: Anaphase-promoting complex subunit 10 (185 aa).

T2 carries the N-acetylthreonine modification. Residues 2 to 185 form the DOC domain; that stretch reads TTPNKTPPGA…IDFMMYRSIR (184 aa). An N6-acetyllysine modification is found at K169.

The protein belongs to the APC10 family. The mammalian APC/C is composed at least of 14 distinct subunits ANAPC1, ANAPC2, CDC27/APC3, ANAPC4, ANAPC5, CDC16/APC6, ANAPC7, CDC23/APC8, ANAPC10, ANAPC11, CDC26/APC12, ANAPC13, ANAPC15 and ANAPC16 that assemble into a complex of at least 19 chains with a combined molecular mass of around 1.2 MDa; APC/C interacts with FZR1 and FBXO5. The C-terminus of APC10 binds to CDC27/APC3. Interacts with PIWIL1; interaction only takes place when PIWIL1 binds piRNA. Interacts with FBXO43; the interaction is direct.

The protein operates within protein modification; protein ubiquitination. Its function is as follows. Component of the anaphase promoting complex/cyclosome (APC/C), a cell cycle-regulated E3 ubiquitin ligase that controls progression through mitosis and the G1 phase of the cell cycle. The APC/C complex acts by mediating ubiquitination and subsequent degradation of target proteins: it mainly mediates the formation of 'Lys-11'-linked polyubiquitin chains and, to a lower extent, the formation of 'Lys-48'- and 'Lys-63'-linked polyubiquitin chains. The APC/C complex catalyzes assembly of branched 'Lys-11'-/'Lys-48'-linked branched ubiquitin chains on target proteins. This Mus musculus (Mouse) protein is Anaphase-promoting complex subunit 10 (Anapc10).